We begin with the raw amino-acid sequence, 360 residues long: Mannose-1-phosphate guanylyltransferase catalytic subunit beta (360 aa).

Residues 2–222 (KALILVGGYG…QGFWMDIGQP (221 aa)) form a substrate-binding domain region. D110 is a GDP-alpha-D-mannose binding site. Position 110 (D110) interacts with Mg(2+). K162 is a catalytic residue. GDP-alpha-D-mannose is bound at residue D218. Position 218 (D218) interacts with Mg(2+). Residues 245 to 360 (CSGPGIVGNV…ESVPEPRIIM (116 aa)) form a hexapeptide repeat domain region.

This sequence belongs to the transferase hexapeptide repeat family. As to quaternary structure, component of the GMPPA-GMPPB mannose-1-phosphate guanylyltransferase complex composed of 4 GMPPA subunits and 8 GMPPB subunits; the complex is organized into three layers, a central layer made up of 2 GMPPA dimers sandwiched between two layers each made up of 2 GMPPB dimers. GMPPB catalytic activity is reduced when part of the complex and binding of GDP-alpha-D-Mannose by GMPPA induces allosteric feedback inhibition of GMPPB. Requires Mg(2+) as cofactor. Ubiquitously expressed, including in brain and skeletal muscle. As to expression, weakly expressed with highest expression in skeletal muscle, brain and gonads.

The protein resides in the cytoplasm. It carries out the reaction alpha-D-mannose 1-phosphate + GTP + H(+) = GDP-alpha-D-mannose + diphosphate. It functions in the pathway nucleotide-sugar biosynthesis; GDP-alpha-D-mannose biosynthesis; GDP-alpha-D-mannose from alpha-D-mannose 1-phosphate (GTP route): step 1/1. Enzyme activity is reduced by incorporation into the GMPPA-GMPPB mannose-1-phosphate guanylyltransferase complex. Allosterically inhibited, when part of the GMPPA-GMPPB complex, by GDP-alpha-D-mannose binding to GMPPA. Its function is as follows. Catalytic subunit of the GMPPA-GMPPB mannose-1-phosphate guanylyltransferase complex. Catalyzes the formation of GDP-mannose, an essential precursor of glycan moieties of glycoproteins and glycolipids. Can catalyze the reverse reaction in vitro. Together with GMPPA regulates GDP-alpha-D-mannose levels. The polypeptide is Mannose-1-phosphate guanylyltransferase catalytic subunit beta (Homo sapiens (Human)).